Here is a 247-residue protein sequence, read N- to C-terminus: UDP-N-acetyl-D-mannosaminuronic acid transferase (247 aa).

The protein belongs to the glycosyltransferase 26 family.

The enzyme catalyses UDP-N-acetyl-alpha-D-mannosaminouronate + N-acetyl-alpha-D-glucosaminyl-di-trans,octa-cis-undecaprenyl diphosphate = beta-D-ManNAcA-(1-&gt;4)-alpha-D-GlcNAc-di-trans,octa-cis-undecaprenyl diphosphate + UDP + H(+). It functions in the pathway bacterial outer membrane biogenesis; enterobacterial common antigen biosynthesis. Catalyzes the synthesis of Und-PP-GlcNAc-ManNAcA (Lipid II), the second lipid-linked intermediate involved in enterobacterial common antigen (ECA) synthesis. This Enterobacter sp. (strain 638) protein is UDP-N-acetyl-D-mannosaminuronic acid transferase.